The chain runs to 394 residues: Anthocyanidin 3-O-glucosyltransferase 6 (394 aa).

Asp37 functions as the Charge relay in the catalytic mechanism. 8 residues coordinate UDP-alpha-D-glucose: Thr59, Ala267, Gln269, His284, Trp287, Asn288, Ser289, and Glu292. Ala307 contributes to the an anthocyanidin binding site. Residues Glu308 and Gln309 each contribute to the UDP-alpha-D-glucose site.

Belongs to the UDP-glycosyltransferase family. Expressed in cotyledons and leaves.

The catalysed reaction is an anthocyanidin + UDP-alpha-D-glucose + H(+) = an anthocyanidin 3-O-beta-D-glucoside + UDP. It functions in the pathway pigment biosynthesis; anthocyanin biosynthesis. In the presence of other necessary color factors, this glycosylation reaction allows the accumulation of anthocyanin pigments. May be involved in glycosylation of unstable cyanohydrins to produce stable cyanoglucosides. This is Anthocyanidin 3-O-glucosyltransferase 6 (GT6) from Manihot esculenta (Cassava).